Reading from the N-terminus, the 443-residue chain is Thymidine phosphorylase (443 aa).

It belongs to the thymidine/pyrimidine-nucleoside phosphorylase family. As to quaternary structure, homodimer.

It carries out the reaction thymidine + phosphate = 2-deoxy-alpha-D-ribose 1-phosphate + thymine. It participates in pyrimidine metabolism; dTMP biosynthesis via salvage pathway; dTMP from thymine: step 1/2. Functionally, the enzymes which catalyze the reversible phosphorolysis of pyrimidine nucleosides are involved in the degradation of these compounds and in their utilization as carbon and energy sources, or in the rescue of pyrimidine bases for nucleotide synthesis. This is Thymidine phosphorylase from Shewanella pealeana (strain ATCC 700345 / ANG-SQ1).